The primary structure comprises 860 residues: Nuclear cap-binding protein complex subunit 1 (860 aa).

Residues 36–271 (CKDMLPDIRT…SNVKNALAND (236 aa)) enclose the MIF4G domain.

This sequence belongs to the NCBP1 family. In terms of assembly, component of the nuclear cap-binding complex (CBC).

It localises to the nucleus. In terms of biological role, component of the cap-binding complex (CBC) involved in the nuclear export of capped U snRNAs. The CBC complex is required for efficient pre-mRNA splicing through efficient commitment complex and spliceosome formation; and involved in rRNA processing at sites A0, A1 and A2. The chain is Nuclear cap-binding protein complex subunit 1 (CBC1) from Eremothecium gossypii (strain ATCC 10895 / CBS 109.51 / FGSC 9923 / NRRL Y-1056) (Yeast).